The chain runs to 489 residues: Glutamyl-tRNA(Gln) amidotransferase subunit A (489 aa).

Residues Lys75 and Ser150 each act as charge relay system in the active site. The active-site Acyl-ester intermediate is Ser174.

Belongs to the amidase family. GatA subfamily. Heterotrimer of A, B and C subunits.

It catalyses the reaction L-glutamyl-tRNA(Gln) + L-glutamine + ATP + H2O = L-glutaminyl-tRNA(Gln) + L-glutamate + ADP + phosphate + H(+). Its function is as follows. Allows the formation of correctly charged Gln-tRNA(Gln) through the transamidation of misacylated Glu-tRNA(Gln) in organisms which lack glutaminyl-tRNA synthetase. The reaction takes place in the presence of glutamine and ATP through an activated gamma-phospho-Glu-tRNA(Gln). In Gloeobacter violaceus (strain ATCC 29082 / PCC 7421), this protein is Glutamyl-tRNA(Gln) amidotransferase subunit A.